Consider the following 78-residue polypeptide: Large ribosomal subunit protein uL29 (78 aa).

It belongs to the universal ribosomal protein uL29 family.

The protein is Large ribosomal subunit protein uL29 of Crocosphaera subtropica (strain ATCC 51142 / BH68) (Cyanothece sp. (strain ATCC 51142)).